The sequence spans 381 residues: Succinate--CoA ligase [ADP-forming] subunit beta (381 aa).

The ATP-grasp domain occupies 9–236 (KELLRVAGVP…ESSEAPSEVD (228 aa)). ATP contacts are provided by residues Lys45, 52–54 (GRG), Ala94, and Glu99. Positions 191 and 205 each coordinate Mg(2+). Substrate is bound by residues Asn256 and 313 to 315 (GIT).

This sequence belongs to the succinate/malate CoA ligase beta subunit family. As to quaternary structure, heterotetramer of two alpha and two beta subunits. Mg(2+) serves as cofactor.

It carries out the reaction succinate + ATP + CoA = succinyl-CoA + ADP + phosphate. It catalyses the reaction GTP + succinate + CoA = succinyl-CoA + GDP + phosphate. The protein operates within carbohydrate metabolism; tricarboxylic acid cycle; succinate from succinyl-CoA (ligase route): step 1/1. Its function is as follows. Succinyl-CoA synthetase functions in the citric acid cycle (TCA), coupling the hydrolysis of succinyl-CoA to the synthesis of either ATP or GTP and thus represents the only step of substrate-level phosphorylation in the TCA. The beta subunit provides nucleotide specificity of the enzyme and binds the substrate succinate, while the binding sites for coenzyme A and phosphate are found in the alpha subunit. The protein is Succinate--CoA ligase [ADP-forming] subunit beta of Gemmatimonas aurantiaca (strain DSM 14586 / JCM 11422 / NBRC 100505 / T-27).